A 512-amino-acid chain; its full sequence is ATP synthase subunit alpha 2 (512 aa).

Residue 169–176 (GDRQTGKT) participates in ATP binding.

Belongs to the ATPase alpha/beta chains family. As to quaternary structure, F-type ATPases have 2 components, CF(1) - the catalytic core - and CF(0) - the membrane proton channel. CF(1) has five subunits: alpha(3), beta(3), gamma(1), delta(1), epsilon(1). CF(0) has three main subunits: a(1), b(2) and c(9-12). The alpha and beta chains form an alternating ring which encloses part of the gamma chain. CF(1) is attached to CF(0) by a central stalk formed by the gamma and epsilon chains, while a peripheral stalk is formed by the delta and b chains.

The protein localises to the cell inner membrane. It carries out the reaction ATP + H2O + 4 H(+)(in) = ADP + phosphate + 5 H(+)(out). In terms of biological role, produces ATP from ADP in the presence of a proton gradient across the membrane. The alpha chain is a regulatory subunit. This chain is ATP synthase subunit alpha 2, found in Vibrio campbellii (strain ATCC BAA-1116).